The following is a 101-amino-acid chain: Trp operon repressor homolog (101 aa).

A DNA-binding region spans residues 59–82 (QREIQQNLNTSAATITRGSNMIKT).

The protein belongs to the TrpR family. As to quaternary structure, homodimer.

It is found in the cytoplasm. Functionally, this protein is an aporepressor. When complexed with L-tryptophan it binds the operator region of the trp operon and prevents the initiation of transcription. The chain is Trp operon repressor homolog from Haemophilus influenzae (strain 86-028NP).